The chain runs to 393 residues: NAD(P)H-quinone oxidoreductase subunit H, chloroplastic (393 aa).

It belongs to the complex I 49 kDa subunit family. As to quaternary structure, NDH is composed of at least 16 different subunits, 5 of which are encoded in the nucleus.

The protein resides in the plastid. It localises to the chloroplast thylakoid membrane. It carries out the reaction a plastoquinone + NADH + (n+1) H(+)(in) = a plastoquinol + NAD(+) + n H(+)(out). The enzyme catalyses a plastoquinone + NADPH + (n+1) H(+)(in) = a plastoquinol + NADP(+) + n H(+)(out). In terms of biological role, NDH shuttles electrons from NAD(P)H:plastoquinone, via FMN and iron-sulfur (Fe-S) centers, to quinones in the photosynthetic chain and possibly in a chloroplast respiratory chain. The immediate electron acceptor for the enzyme in this species is believed to be plastoquinone. Couples the redox reaction to proton translocation, and thus conserves the redox energy in a proton gradient. The polypeptide is NAD(P)H-quinone oxidoreductase subunit H, chloroplastic (Manihot esculenta (Cassava)).